The sequence spans 419 residues: CinA-like protein (419 aa).

Belongs to the CinA family.

The polypeptide is CinA-like protein (Leptospira borgpetersenii serovar Hardjo-bovis (strain JB197)).